Reading from the N-terminus, the 695-residue chain is Segment polarity protein dishevelled homolog DVL-1 (695 aa).

Residues 1–85 (MAETKIIYHM…RVVSWLVLAE (85 aa)) enclose the DIX domain. The tract at residues 89-236 (SDAGSQGTDS…RLRQTDRASS (148 aa)) is disordered. The span at 142-151 (SHRRERARRR) shows a compositional bias: basic residues. Residues 152–171 (NRDEAARTNGHPRGDRRREL) show a composition bias toward basic and acidic residues. Residues 177 to 192 (SASTVLSSELESSSFI) show a composition bias toward low complexity. Position 194 is a phosphoserine (Ser-194). The segment covering 201–214 (SRLSSSTEQSTSSR) has biased composition (low complexity). Residues 215–228 (LIRKHKCRRRKQRL) show a composition bias toward basic residues. A PDZ domain is found at 251–323 (TVTLNMERHH…NDDAVRVLRE (73 aa)). The DEP domain occupies 425 to 499 (PDSGLEIRDR…SEQCYYVFGD (75 aa)). The segment covering 551 to 580 (PAYQDPGFSYGSGSAGSQQSEGSKSSGSTR) has biased composition (low complexity). Residues 551 to 641 (PAYQDPGFSY…SQASAVAPGL (91 aa)) form a disordered region. A compositionally biased stretch (polar residues) spans 622–635 (SQLSRGSSPRSQAS).

Belongs to the DSH family. In terms of assembly, interacts with BRD7 and INVS. Interacts (via PDZ domain) with the VANGL1 and VANGL2 (via C-terminus). Interacts (via PDZ domain) with NXN. Interacts with CXXC4. Interacts with ARRB1; the interaction is enhanced by phosphorylation of DVL1. Interacts with CYLD. Interacts (via PDZ domain) with RYK. Self-associates (via DIX domain) and forms higher homooligomers. Interacts (via PDZ domain) with DACT1 and FZD7, where DACT1 and FZD7 compete for the same binding site. Interacts (via DEP domain) with MUSK; the interaction is direct and mediates the formation a DVL1, MUSK and PAK1 ternary complex involved in AChR clustering. Interacts (via PDZ domain) with TMEM88. Interacts with DCDC2. Interacts with FOXK2. Interacts with PKD1 (via extracellular domain). Interacts (via PDZ domain) with CCDC88C/DAPLE; competes with CCDC88C for binding to frizzled receptor FZD7 and dissociates from CCDC88C following initiation of non-canonical Wnt signaling when CCDC88C displaces DVL1 from ligand-activated FZD7. Post-translationally, ubiquitinated; undergoes both 'Lys-48'-linked ubiquitination, leading to its subsequent degradation by the ubiquitin-proteasome pathway, and 'Lys-63'-linked ubiquitination. The interaction with INVS is required for ubiquitination. Deubiquitinated by CYLD, which acts on 'Lys-63'-linked ubiquitin chains.

It localises to the cell membrane. The protein localises to the cytoplasm. It is found in the cytosol. The protein resides in the cytoplasmic vesicle. Its function is as follows. Participates in Wnt signaling by binding to the cytoplasmic C-terminus of frizzled family members and transducing the Wnt signal to down-stream effectors. Plays a role both in canonical and non-canonical Wnt signaling. Plays a role in the signal transduction pathways mediated by multiple Wnt genes. Required for LEF1 activation upon WNT1 and WNT3A signaling. DVL1 and PAK1 form a ternary complex with MUSK which is important for MUSK-dependent regulation of AChR clustering during the formation of the neuromuscular junction (NMJ). In Rattus norvegicus (Rat), this protein is Segment polarity protein dishevelled homolog DVL-1 (Dvl1).